The primary structure comprises 380 residues: MAPNLRKSHPLLKLINNSLIDLPTPSNISAWWNFGSLLGICLLTQILTGLLLATHYTADTTLAFSSVAHTCRNVQYGWLIRNLHANGASFFFICIYLHIGRGFYYGSYLNKETWNTGVILLLALMATAFVGYVLPWGQMSFWGATVITNLFSAIPYIGQTLVEWAWGGFSVDNPTLTRFFALHFLLPFMIAGLAFIHLTFLHESGSNNPLGILSNCDKIPFHPYFSLKDILGFIIMFLPLTTLALFSPNLLGDPENFTPANPLVTPPHIKPEWYFLFAYAILRSIPNKLGGVLALAASVLVLFLTPLLHKSKQRAMTFRPLSQLLFWTLVANLLILTWVGSQPVEHPFIIIGQLASLAYFTILLLLFPIVGALENKMLNY.

4 helical membrane passes run Phe-34 to Thr-54, Trp-78 to Ile-99, Trp-114 to Leu-134, and Phe-179 to Thr-199. Heme b contacts are provided by His-84 and His-98. Heme b is bound by residues His-183 and His-197. His-202 contributes to the a ubiquinone binding site. Transmembrane regions (helical) follow at residues Leu-227–Ser-247, Leu-289–His-309, Leu-321–Ser-341, and Phe-348–Pro-368.

This sequence belongs to the cytochrome b family. In terms of assembly, the cytochrome bc1 complex contains 11 subunits: 3 respiratory subunits (MT-CYB, CYC1 and UQCRFS1), 2 core proteins (UQCRC1 and UQCRC2) and 6 low-molecular weight proteins (UQCRH/QCR6, UQCRB/QCR7, UQCRQ/QCR8, UQCR10/QCR9, UQCR11/QCR10 and a cleavage product of UQCRFS1). This cytochrome bc1 complex then forms a dimer. It depends on heme b as a cofactor.

It is found in the mitochondrion inner membrane. Component of the ubiquinol-cytochrome c reductase complex (complex III or cytochrome b-c1 complex) that is part of the mitochondrial respiratory chain. The b-c1 complex mediates electron transfer from ubiquinol to cytochrome c. Contributes to the generation of a proton gradient across the mitochondrial membrane that is then used for ATP synthesis. The polypeptide is Cytochrome b (MT-CYB) (Uria lomvia (Thick-billed murre)).